Here is a 202-residue protein sequence, read N- to C-terminus: Nucleoside triphosphate pyrophosphatase (202 aa).

Asp-79 acts as the Proton acceptor in catalysis.

Belongs to the Maf family. It depends on a divalent metal cation as a cofactor.

Its subcellular location is the cytoplasm. The catalysed reaction is a ribonucleoside 5'-triphosphate + H2O = a ribonucleoside 5'-phosphate + diphosphate + H(+). It carries out the reaction a 2'-deoxyribonucleoside 5'-triphosphate + H2O = a 2'-deoxyribonucleoside 5'-phosphate + diphosphate + H(+). Functionally, nucleoside triphosphate pyrophosphatase. May have a dual role in cell division arrest and in preventing the incorporation of modified nucleotides into cellular nucleic acids. The polypeptide is Nucleoside triphosphate pyrophosphatase (Rhodospirillum rubrum (strain ATCC 11170 / ATH 1.1.1 / DSM 467 / LMG 4362 / NCIMB 8255 / S1)).